The primary structure comprises 114 residues: Small ribosomal subunit protein uS17 (114 aa).

This sequence belongs to the universal ribosomal protein uS17 family. In terms of assembly, part of the 30S ribosomal subunit.

Functionally, one of the primary rRNA binding proteins, it binds specifically to the 5'-end of 16S ribosomal RNA. This is Small ribosomal subunit protein uS17 from Aeropyrum pernix (strain ATCC 700893 / DSM 11879 / JCM 9820 / NBRC 100138 / K1).